Reading from the N-terminus, the 183-residue chain is Threonylcarbamoyl-AMP synthase (183 aa).

A YrdC-like domain is found at 1–183 (MNITQIIEKL…LFTNQLVRQG (183 aa)).

It belongs to the SUA5 family. TsaC subfamily.

It is found in the cytoplasm. The enzyme catalyses L-threonine + hydrogencarbonate + ATP = L-threonylcarbamoyladenylate + diphosphate + H2O. Its function is as follows. Required for the formation of a threonylcarbamoyl group on adenosine at position 37 (t(6)A37) in tRNAs that read codons beginning with adenine. Catalyzes the conversion of L-threonine, HCO(3)(-)/CO(2) and ATP to give threonylcarbamoyl-AMP (TC-AMP) as the acyladenylate intermediate, with the release of diphosphate. The polypeptide is Threonylcarbamoyl-AMP synthase (Histophilus somni (strain 2336) (Haemophilus somnus)).